The primary structure comprises 822 residues: Ribonucleoside-diphosphate reductase large subunit (822 aa).

Residues threonine 249, serine 264–cysteine 265, glycine 295, asparagine 470–glutamate 474, and proline 651–serine 655 contribute to the substrate site. Cysteine 265 and cysteine 487 form a disulfide bridge. Asparagine 470 acts as the Proton acceptor in catalysis. Cysteine 472 functions as the Cysteine radical intermediate in the catalytic mechanism. Glutamate 474 (proton acceptor) is an active-site residue.

The protein belongs to the ribonucleoside diphosphate reductase large chain family. As to quaternary structure, heterotetramer composed of a homodimer of the large subunit (R1) and a homodimer of the small subunit (R2). Larger multisubunit protein complex are also active, composed of (R1)n(R2)n.

It carries out the reaction a 2'-deoxyribonucleoside 5'-diphosphate + [thioredoxin]-disulfide + H2O = a ribonucleoside 5'-diphosphate + [thioredoxin]-dithiol. Its function is as follows. Ribonucleoside-diphosphate reductase holoenzyme provides the precursors necessary for viral DNA synthesis. Allows virus growth in non-dividing cells, as well as reactivation from latency in infected hosts. Catalyzes the biosynthesis of deoxyribonucleotides from the corresponding ribonucleotides. In Gallus gallus (Chicken), this protein is Ribonucleoside-diphosphate reductase large subunit.